A 509-amino-acid chain; its full sequence is Scavenger receptor class B member 1 (509 aa).

Topologically, residues 1 to 11 are cytoplasmic; it reads MGSRSRARQVA. The helical transmembrane segment at 12 to 32 threads the bilayer; sequence AALGFVGLLLAALGAVMIVMV. Topologically, residues 33 to 439 are extracellular; the sequence is PSIIKQQVLK…FYTQLVLMPK (407 aa). N-linked (GlcNAc...) asparagine glycans are attached at residues Asn102, Asn108, Asn173, Asn212, Asn255, Asn310, Asn330, and Asn383. A disulfide bond links Cys251 and Cys384. The helical transmembrane segment at 440–460 threads the bilayer; sequence VLHYAQYVLLALGCVLLFIPI. Over 461–509 the chain is Cytoplasmic; that stretch reads VYQIRSQEKCYLFWSSSKKGSKDKEAIQAYSESLMTPAPKGTVLQEARL.

It belongs to the CD36 family. As to quaternary structure, the C-terminal region binds to PDZK1. N-glycosylated. In terms of processing, the six cysteines of the extracellular domain are all involved in intramolecular disulfide bonds.

The protein resides in the cell membrane. Its subcellular location is the membrane. It is found in the caveola. Its function is as follows. Receptor for different ligands such as phospholipids, cholesterol ester, lipoproteins, phosphatidylserine and apoptotic cells. Receptor for HDL, mediating selective uptake of cholesteryl ether and HDL-dependent cholesterol efflux. Also facilitates the flux of free and esterified cholesterol between the cell surface and apoB-containing lipoproteins and modified lipoproteins, although less efficiently than HDL. May be involved in the phagocytosis of apoptotic cells, via its phosphatidylserine binding activity. The sequence is that of Scavenger receptor class B member 1 (SCARB1) from Sus scrofa (Pig).